The following is a 433-amino-acid chain: Succinate--CoA ligase [ADP-forming] subunit beta, mitochondrial (433 aa).

Residues 1–23 (MLTRSVLRKAPRAFSPFLQKRNL) constitute a mitochondrion transit peptide. In terms of domain architecture, ATP-grasp spans 31 to 273 (HDILRKFGVD…ISQEDPDEAR (243 aa)). ATP contacts are provided by residues Lys68, 75–77 (GRG), and Glu136. Positions 228 and 242 each coordinate Mg(2+). Substrate is bound by residues Asn293 and 350 to 352 (GIV).

The protein belongs to the succinate/malate CoA ligase beta subunit family. In terms of assembly, heterodimer of an alpha and a beta subunit. Mg(2+) is required as a cofactor.

The protein resides in the mitochondrion. It carries out the reaction succinate + ATP + CoA = succinyl-CoA + ADP + phosphate. It participates in carbohydrate metabolism; tricarboxylic acid cycle; succinate from succinyl-CoA (ligase route): step 1/1. Its function is as follows. Succinyl-CoA synthetase functions in the citric acid cycle (TCA), coupling the hydrolysis of succinyl-CoA to the synthesis of ATP and thus represents the only step of substrate-level phosphorylation in the TCA. The beta subunit provides nucleotide specificity of the enzyme and binds the substrate succinate, while the binding sites for coenzyme A and phosphate are found in the alpha subunit. This chain is Succinate--CoA ligase [ADP-forming] subunit beta, mitochondrial, found in Schizosaccharomyces pombe (strain 972 / ATCC 24843) (Fission yeast).